A 652-amino-acid chain; its full sequence is MRFAASIAVALPVIHAASAQGFPPPVKGVTVVKSKFDENVKITYKENDICETTQGVRSFTGHVHLPPDNDDFGVYRNYSINTFFWFFEAREDPKNAPLSIWLNGGPGSSSMIGLFQENGPCWVNEDSKSTTNNSFSWNNKVNMLYIDQPNQVGFSYDVPTNITYSTINDTISVADFSNGVPAQNLSTLVGTGSSQNPWATANNTVNAARSIWHFAQVWFQEFPEHKPNNNKISIWTESYGGRYGPSFASYFQEQNEKIKNHTITEEGEMHILNLDTLGIINGCIDLMFQAESYAEFPYNNTYGIKAYTKEKRDAILHDIHRPDGCFDKVTKCREAAKEGDPHFYSNNATVNTICADANSACDKYLMDPFQETNLGYYDIAHPLQDPFPPPFYKGFLSQSSVLSDMGSPVNFSQYAQAVGKSFHGVGDYARPDVRGFTGDIAYLLESGVKVALVYGDRDYICNWFGGEQVSLGLNYTGTQDFHRAKYADVKVNSSYVGGVVRQHGNFSFTRVFEAGHEVPGYQPETALKIFERIMFNKDISTGEIDIAQKPDYGTTGTESTFHIKNDIPPSPEPTCYLLSADGTCTPEQLNAIKDGTAVVENYIIKSPAASKGNPPPTTTSSPTAAPTAGSAMLKAPVAMLAISALTVLAFFL.

A signal peptide spans 1–19 (MRFAASIAVALPVIHAASA). A disulfide bridge connects residues C50 and C121. N-linked (GlcNAc...) asparagine glycans are attached at residues N77, N132, N161, N168, N184, and N202. Residue S238 is part of the active site. N-linked (GlcNAc...) asparagine glycans are attached at residues N260, N299, N347, and N410. 2 cysteine pairs are disulfide-bonded: C325–C361 and C332–C354. Residue D458 is part of the active site. C461 is a substrate binding site. N-linked (GlcNAc...) asparagine glycans are attached at residues N474, N492, and N505. The active site involves H516. E517 contacts substrate. Residues 608–627 (AASKGNPPPTTTSSPTAAPT) form a disordered region. Residues 618–627 (TTSSPTAAPT) show a composition bias toward low complexity. The GPI-anchor amidated glycine moiety is linked to residue G629. Positions 630 to 652 (SAMLKAPVAMLAISALTVLAFFL) are cleaved as a propeptide — removed in mature form.

Belongs to the peptidase S10 family.

The protein localises to the cell membrane. The enzyme catalyses Preferential release of a C-terminal arginine or lysine residue.. Extracellular serine carboxypeptidase that contributes to pathogenicity. The sequence is that of Carboxypeptidase S1 homolog A (SCPA) from Trichophyton rubrum (Athlete's foot fungus).